The chain runs to 267 residues: UDP-glucose:undecaprenyl-phosphate glucose-1-phosphate transferase (267 aa).

Residues 83–103 (VAAALLTALFAPLLLLAALAI) form a helical membrane-spanning segment.

It belongs to the bacterial sugar transferase family.

The protein localises to the cell membrane. It catalyses the reaction di-trans,octa-cis-undecaprenyl phosphate + UDP-alpha-D-glucose = alpha-D-glucosyl di-trans,octa-cis-undecaprenyl diphosphate + UMP. Is likely the initiating enzyme for holdfast polysaccharide synthesis. Catalyzes the transfer of the glucose-1-phosphate moiety from UDP-Glc onto the carrier lipid undecaprenyl phosphate (C55-P), forming a phosphoanhydride bond yielding to glucosyl-pyrophosphoryl-undecaprenol (Glc-PP-C55). Also possesses a weak galactose-1-P transferase activity. The protein is UDP-glucose:undecaprenyl-phosphate glucose-1-phosphate transferase (pssY) of Caulobacter vibrioides (strain ATCC 19089 / CIP 103742 / CB 15) (Caulobacter crescentus).